The chain runs to 229 residues: Biosynthetic peptidoglycan transglycosylase (229 aa).

A helical transmembrane segment spans residues 14–34 (FITWRFLLVVVLLLLVLLLVL).

Belongs to the glycosyltransferase 51 family.

The protein localises to the cell inner membrane. The enzyme catalyses [GlcNAc-(1-&gt;4)-Mur2Ac(oyl-L-Ala-gamma-D-Glu-L-Lys-D-Ala-D-Ala)](n)-di-trans,octa-cis-undecaprenyl diphosphate + beta-D-GlcNAc-(1-&gt;4)-Mur2Ac(oyl-L-Ala-gamma-D-Glu-L-Lys-D-Ala-D-Ala)-di-trans,octa-cis-undecaprenyl diphosphate = [GlcNAc-(1-&gt;4)-Mur2Ac(oyl-L-Ala-gamma-D-Glu-L-Lys-D-Ala-D-Ala)](n+1)-di-trans,octa-cis-undecaprenyl diphosphate + di-trans,octa-cis-undecaprenyl diphosphate + H(+). It participates in cell wall biogenesis; peptidoglycan biosynthesis. Peptidoglycan polymerase that catalyzes glycan chain elongation from lipid-linked precursors. In Shewanella denitrificans (strain OS217 / ATCC BAA-1090 / DSM 15013), this protein is Biosynthetic peptidoglycan transglycosylase.